Here is a 113-residue protein sequence, read N- to C-terminus: DNA-directed RNA polymerase subunit Rpo4 (113 aa).

Belongs to the eukaryotic RPB4 RNA polymerase subunit family. In terms of assembly, part of the 13-subunit RNA polymerase complex. Forms a stalk with Rpo7 that extends from the main structure.

The protein resides in the cytoplasm. It carries out the reaction RNA(n) + a ribonucleoside 5'-triphosphate = RNA(n+1) + diphosphate. DNA-dependent RNA polymerase (RNAP) catalyzes the transcription of DNA into RNA using the four ribonucleoside triphosphates as substrates. This subunit is less well bound than the others. This chain is DNA-directed RNA polymerase subunit Rpo4, found in Saccharolobus solfataricus (strain ATCC 35092 / DSM 1617 / JCM 11322 / P2) (Sulfolobus solfataricus).